We begin with the raw amino-acid sequence, 141 residues long: Hemoglobin subunit alpha-A (141 aa).

One can recognise a Globin domain in the interval 1–141 (VLSAADKNNV…VGTVLTAKYR (141 aa)). Position 58 (His58) interacts with O2. Position 87 (His87) interacts with heme b.

This sequence belongs to the globin family. In terms of assembly, heterotetramer of two alpha chains and two beta chains. As to expression, red blood cells.

Its function is as follows. Involved in oxygen transport from the lung to the various peripheral tissues. In Phasianus colchicus colchicus (Black-necked pheasant), this protein is Hemoglobin subunit alpha-A (HBAA).